The following is a 510-amino-acid chain: MQVKIVQVFPCLVLLVKLVLLSVLLPSATGSYHCSNNATQNSYLWRIEASPPIYLFGTMHVPYKKLWDDVPDNVKSVLSLSEHLCVELRLTDSETSKNLSACRYLPKNETLESVLPGGLYVRVLKYFVRIQNQFPKWLFGNASINGLSRIESDRLFHAMIGNWNRLRPVWLLMLISSLSRENVQERSIPLLDVFLDRAAEGMGKNVEAVEVYKEQCRPFNRLNNTKVFVALRKLLDYLEPLADGPISSTDSDLETYNCGDFKSLVSARPILPLPSSSKLPNLTSEEAGDLESINEFLVSQIVYRRNRRMSKTIMSLLSRQRNETYLFAIGAGHFVGERNVVHMLKKKGYSVNRLSVTETIPGPPLPKNIISLGDPSSQLTILNISSTIPTLPPNRPSHVPPTLSPETIARIIQSVFNNTQSIYTVDSVEVTPTTTSLNSATASTTVATPTSSVTPPTSSSSQTRSLTISDSQRTSDDSAFIPSASSGLRYNIGLVCVTLFFVLLIITSAL.

A signal peptide spans 1-30; that stretch reads MQVKIVQVFPCLVLLVKLVLLSVLLPSATG. Over 31–489 the chain is Extracellular; sequence SYHCSNNATQ…FIPSASSGLR (459 aa). Asn-37, Asn-98, Asn-108, Asn-141, Asn-223, Asn-281, Asn-322, Asn-383, and Asn-417 each carry an N-linked (GlcNAc...) asparagine glycan. Low complexity predominate over residues 435–471; the sequence is TSLNSATASTTVATPTSSVTPPTSSSSQTRSLTISDS. Residues 435 to 477 are disordered; the sequence is TSLNSATASTTVATPTSSVTPPTSSSSQTRSLTISDSQRTSDD. A helical transmembrane segment spans residues 490–510; sequence YNIGLVCVTLFFVLLIITSAL.

This sequence belongs to the TIKI family. It depends on Mn(2+) as a cofactor. Requires Co(2+) as cofactor.

The protein localises to the membrane. Functionally, metalloprotease. This Amphimedon queenslandica (Sponge) protein is Metalloprotease TIKI homolog.